The primary structure comprises 311 residues: Solute carrier family 25 member 36 (311 aa).

Solcar repeat units lie at residues 4 to 108 (RDTL…CKEK), 116 to 203 (DSTQ…IKQK), and 224 to 308 (SDFV…VVYL). Helical transmembrane passes span 7-27 (LVHL…TCPL), 41-57 (LYIS…ASVN), 111-131 (GVFD…AGFT), 180-200 (MSAS…YESI), 226-246 (FVRM…IAYP), and 291-311 (QIPN…LLNG).

It belongs to the mitochondrial carrier (TC 2.A.29) family.

It localises to the mitochondrion inner membrane. The enzyme catalyses UTP(in) + CTP(out) = UTP(out) + CTP(in). The catalysed reaction is CTP(out) + UDP(in) = CTP(in) + UDP(out). It catalyses the reaction UMP(in) + CTP(out) = UMP(out) + CTP(in). It carries out the reaction dUTP(in) + CTP(out) = dUTP(out) + CTP(in). The enzyme catalyses dUMP(in) + CTP(out) = dUMP(out) + CTP(in). The catalysed reaction is CDP(in) + CTP(out) = CDP(out) + CTP(in). It catalyses the reaction CTP(out) + CMP(in) = CTP(in) + CMP(out). It carries out the reaction dCTP(in) + CTP(out) = dCTP(out) + CTP(in). The enzyme catalyses dCDP(in) + CTP(out) = dCDP(out) + CTP(in). The catalysed reaction is dCMP(in) + CTP(out) = dCMP(out) + CTP(in). It catalyses the reaction GTP(in) + CTP(out) = GTP(out) + CTP(in). It carries out the reaction CTP(out) + GDP(in) = CTP(in) + GDP(out). The enzyme catalyses GMP(in) + CTP(out) = GMP(out) + CTP(in). The catalysed reaction is dGTP(in) + CTP(out) = dGTP(out) + CTP(in). It catalyses the reaction dGMP(in) + CTP(out) = dGMP(out) + CTP(in). It carries out the reaction ITP(in) + CTP(out) = ITP(out) + CTP(in). The enzyme catalyses IDP(in) + CTP(out) = IDP(out) + CTP(in). The catalysed reaction is IMP(in) + CTP(out) = IMP(out) + CTP(in). It catalyses the reaction CTP(out) = CTP(in). In terms of biological role, mitochondrial transporter that imports/exports pyrimidine nucleotides into and from mitochondria. Selectively transports cytosine, guanosine, inosine and uridine (deoxy)nucleoside mono-, di-, and triphosphates by antiport mechanism. Catalyzes uniport at much lower rate. May import (deoxy)nucleoside triphosphates in exchange for intramitochondrial (deoxy)nucleoside mono- and diphosphates, thus providing precursors necessary for de novo synthesis of mitochondrial DNA and RNA while exporting products of their catabolism. Participates in mitochondrial genome maintenance, regulation of mitochondrial membrane potential and mitochondrial respiration. The protein is Solute carrier family 25 member 36 (Slc25a36) of Mus musculus (Mouse).